We begin with the raw amino-acid sequence, 89 residues long: MKKTLLIAASLSFFSASALATPDCVTGKVEYTKYNDDDTFTVKVGDKELFTNRWNLQSLLLSAQITGMTVTIKTNACHNGGGFSEVIFR.

The signal sequence occupies residues 1-20 (MKKTLLIAASLSFFSASALA). C24 and C77 are joined by a disulfide.

The protein belongs to the stxB family. Shiga toxin contains a single subunit A and five copies of subunit B.

The B subunit is responsible for the binding of the holotoxin to specific receptors on the target cell surface, such as globotriaosylceramide (Gb3) in human intestinal microvilli. In Shigella sonnei (Shigella sonnei bacteriophage 7888), this protein is Shiga toxin subunit B (stxB).